We begin with the raw amino-acid sequence, 247 residues long: 5-oxoprolinase subunit A (247 aa).

It belongs to the LamB/PxpA family. In terms of assembly, forms a complex composed of PxpA, PxpB and PxpC.

The enzyme catalyses 5-oxo-L-proline + ATP + 2 H2O = L-glutamate + ADP + phosphate + H(+). In terms of biological role, catalyzes the cleavage of 5-oxoproline to form L-glutamate coupled to the hydrolysis of ATP to ADP and inorganic phosphate. The chain is 5-oxoprolinase subunit A from Histophilus somni (strain 129Pt) (Haemophilus somnus).